The chain runs to 65 residues: MPKMKTKKSAAKRFVVRPGGTVKRGQAFKRHILTKKTTKNKRHLRGSTAVHDADMNSVRAMLPFA.

It belongs to the bacterial ribosomal protein bL35 family.

The protein is Large ribosomal subunit protein bL35 of Paraburkholderia phytofirmans (strain DSM 17436 / LMG 22146 / PsJN) (Burkholderia phytofirmans).